The following is a 1179-amino-acid chain: Integrin alpha-E (1179 aa).

The N-terminal stretch at 1-18 (MWLFHTLLCIASLALLAA) is a signal peptide. Residues 19 to 1124 (FNVDVARPWL…VFLKDEKYHS (1106 aa)) are Extracellular-facing. FG-GAP repeat units lie at residues 22–79 (DVAR…EILC) and 80–138 (HPVE…PQAQ). Asn-49 carries N-linked (GlcNAc...) asparagine glycosylation. Cystine bridges form between Cys-70-Cys-79 and Cys-126-Cys-159. The segment at 145–199 (ENLLDPDARVDTGDCYSNKEGGGEDDVNTARQRRALEKEEEEDKEEEEDEEEEEA) is X-domain (extra domain). The disordered stretch occupies residues 158–200 (DCYSNKEGGGEDDVNTARQRRALEKEEEEDKEEEEDEEEEEAG). Residues 182 to 200 (KEEEEDKEEEEDEEEEEAG) show a composition bias toward acidic residues. The 190-residue stretch at 200–389 (GTEIAIILDG…SKLRYNIISM (190 aa)) folds into the VWFA domain. Asn-271 and Asn-321 each carry an N-linked (GlcNAc...) asparagine glycan. The FG-GAP 3 repeat unit spans residues 390–442 (EGTVGDALHYQLAQIGFSAQILDERQVLLGAVGAFDWSGGALLYDTRSRRGRF). Residue Asn-444 is glycosylated (N-linked (GlcNAc...) asparagine). FG-GAP repeat units lie at residues 447-499 (AAAA…GREA), 500-560 (SFLP…DGSF), 563-627 (ARIL…GLSA), and 631-691 (QRIR…FTPS). Ca(2+)-binding residues include Asp-522, Asp-524, Asp-526, Asp-530, Asp-586, Ser-588, Asp-590, Asp-594, Asp-654, Ser-656, Asp-658, and Asp-662. Cys-706 and Cys-762 are joined by a disulfide. N-linked (GlcNAc...) asparagine glycans are attached at residues Asn-726 and Asn-782. Cysteines 823 and 829 form a disulfide. The N-linked (GlcNAc...) asparagine glycan is linked to Asn-857. The cysteines at positions 893 and 907 are disulfide-linked. N-linked (GlcNAc...) asparagine glycosylation is found at Asn-934 and Asn-954. Cystine bridges form between Cys-1008–Cys-1033 and Cys-1041–Cys-1057. Asn-1065 and Asn-1096 each carry an N-linked (GlcNAc...) asparagine glycan. A helical membrane pass occupies residues 1125–1147 (LPIIIKGSVGGLLVLIVILVILF). Over 1148-1179 (KCGFFKRKYQQLNLESIRKAQLKSENLLEEEN) the chain is Cytoplasmic. The short motif at 1150 to 1154 (GFFKR) is the GFFKR motif element.

Belongs to the integrin alpha chain family. Heterodimer of an alpha and a beta subunit. The alpha subunit is composed of a heavy and a light chains linked by a disulfide bond. Alpha-E associates with beta-7. As to expression, expressed on a subclass of T-lymphocytes known as intra-epithelial lymphocytes which are located between mucosal epithelial cells.

Its subcellular location is the membrane. Functionally, integrin alpha-E/beta-7 is a receptor for E-cadherin. It mediates adhesion of intra-epithelial T-lymphocytes to epithelial cell monolayers. In Homo sapiens (Human), this protein is Integrin alpha-E (ITGAE).